Here is a 615-residue protein sequence, read N- to C-terminus: Dihydroxy-acid dehydratase (615 aa).

Asp-81 contacts Mg(2+). Cys-122 is a binding site for [2Fe-2S] cluster. Asp-123 and Lys-124 together coordinate Mg(2+). N6-carboxylysine is present on Lys-124. Cys-195 serves as a coordination point for [2Fe-2S] cluster. Glu-491 is a Mg(2+) binding site. The active-site Proton acceptor is Ser-517.

It belongs to the IlvD/Edd family. As to quaternary structure, homodimer. The cofactor is [2Fe-2S] cluster. Mg(2+) is required as a cofactor.

It carries out the reaction (2R)-2,3-dihydroxy-3-methylbutanoate = 3-methyl-2-oxobutanoate + H2O. The enzyme catalyses (2R,3R)-2,3-dihydroxy-3-methylpentanoate = (S)-3-methyl-2-oxopentanoate + H2O. It functions in the pathway amino-acid biosynthesis; L-isoleucine biosynthesis; L-isoleucine from 2-oxobutanoate: step 3/4. Its pathway is amino-acid biosynthesis; L-valine biosynthesis; L-valine from pyruvate: step 3/4. Its function is as follows. Functions in the biosynthesis of branched-chain amino acids. Catalyzes the dehydration of (2R,3R)-2,3-dihydroxy-3-methylpentanoate (2,3-dihydroxy-3-methylvalerate) into 2-oxo-3-methylpentanoate (2-oxo-3-methylvalerate) and of (2R)-2,3-dihydroxy-3-methylbutanoate (2,3-dihydroxyisovalerate) into 2-oxo-3-methylbutanoate (2-oxoisovalerate), the penultimate precursor to L-isoleucine and L-valine, respectively. The protein is Dihydroxy-acid dehydratase of Pseudoalteromonas atlantica (strain T6c / ATCC BAA-1087).